The sequence spans 470 residues: Low molecular weight neuronal intermediate filament (470 aa).

The interval 1–91 is head; sequence MTSRELYTSS…KIVRTNEKEQ (91 aa). The IF rod domain maps to 88–399; that stretch reads EKEQLQGLND…KLLEGEETRL (312 aa). Residues 91 to 123 form a coil 1A region; it reads QLQGLNDRFVTYIEKVHHLEQQNKLLESEVTLL. A linker 1 region spans residues 121-136; that stretch reads TLLRQKHSEPSRLSHI. Residues 137–232 are coil 1B; sequence YEQEIRELRS…KVHEEEIAEL (96 aa). Residues 233–251 form a linker 12 region; sequence QASVQEAQISVEMDVVSKP. A coil 2A region spans residues 252-270; the sequence is DLTAALKEIRMQYEVLSAR. Residues 271–279 form a linker 2 region; sequence NQQSSEEWY. A coil 2B region spans residues 280–395; the sequence is QAKIANVSLE…AAYRKLLEGE (116 aa). The interval 396–470 is tail; it reads ETRLTSVGGG…EKISQKAAAN (75 aa). Residues 414-431 show a composition bias toward low complexity; the sequence is FSSGSYSGGRSSTTSTIS. The interval 414-470 is disordered; that stretch reads FSSGSYSGGRSSTTSTISIRKEEKKESPEGGKGGSSGQPKTSKPGDQEKISQKAAAN. A compositionally biased stretch (basic and acidic residues) spans 432-442; it reads IRKEEKKESPE.

It belongs to the intermediate filament family. As to expression, nervous system; in axons in the PNS and in small perikarya in the dorsal root ganglion.

This Xenopus laevis (African clawed frog) protein is Low molecular weight neuronal intermediate filament.